Here is a 140-residue protein sequence, read N- to C-terminus: Large ribosomal subunit protein uL11 (140 aa).

This sequence belongs to the universal ribosomal protein uL11 family. As to quaternary structure, part of the ribosomal stalk of the 50S ribosomal subunit. Interacts with L10 and the large rRNA to form the base of the stalk. L10 forms an elongated spine to which L12 dimers bind in a sequential fashion forming a multimeric L10(L12)X complex. In terms of processing, one or more lysine residues are methylated.

Its function is as follows. Forms part of the ribosomal stalk which helps the ribosome interact with GTP-bound translation factors. The sequence is that of Large ribosomal subunit protein uL11 from Syntrophobacter fumaroxidans (strain DSM 10017 / MPOB).